We begin with the raw amino-acid sequence, 756 residues long: Conserved oligomeric Golgi complex subunit 2 (756 aa).

Positions 62–82 form a coiled coil; it reads RSELRSHLASLNRELVDLINR. The interval 173–199 is disordered; the sequence is WQNEDANSMGRSSMNDENSTQQDGTTM.

The protein belongs to the COG2 family. As to quaternary structure, homodimer. Component of the conserved oligomeric Golgi complex which is composed of eight different subunits and is required for normal Golgi morphology and localization. Binds to COG3 and COG4. Interacts with FPP3/VETH1 and FPP2/VETH2; this interaction promotes the association between cortical microtubules and EXO70A1. Binds to SEC15B, and, possibly, with EXO70A1, SEC3A and SEC10A.

The protein resides in the golgi apparatus membrane. Its function is as follows. Required for normal Golgi morphology and function. Ensures, when in complex with FPP3/VETH1 and FPP2/VETH2, the correct secondary cell wall (SCW) deposition pattern by recruiting exocyst components to cortical microtubules in xylem cells during secondary cell wall deposition. The chain is Conserved oligomeric Golgi complex subunit 2 from Arabidopsis thaliana (Mouse-ear cress).